We begin with the raw amino-acid sequence, 163 residues long: Glutathione peroxidase 1 (163 aa).

Cys36 is an active-site residue.

The protein belongs to the glutathione peroxidase family.

The protein localises to the cytoplasm. It carries out the reaction 2 glutathione + H2O2 = glutathione disulfide + 2 H2O. Functionally, may constitute a glutathione peroxidase-like protective system against oxidative stresses. The sequence is that of Glutathione peroxidase 1 (gpx-1) from Caenorhabditis elegans.